The chain runs to 487 residues: Recombining binding protein suppressor of hairless (487 aa).

DNA-binding stretches follow at residues 44–54 and 152–157; these read QKSYGNEKRFF and SKPSKK. The residue at position 162 (K162) is an N6-acetyllysine. The segment at 179–184 is DNA-binding; that stretch reads RLRSQT. Residues 342-432 enclose the IPT/TIG domain; that stretch reads PVVESLQLNG…YSTSLTFTYT (91 aa). The span at 452–468 shows a compositional bias: polar residues; the sequence is SSQVPPNESNTNSEGSY. Positions 452–487 are disordered; the sequence is SSQVPPNESNTNSEGSYTNVSTNSTSVTSSTATVVS. Over residues 469–487 the composition is skewed to low complexity; the sequence is TNVSTNSTSVTSSTATVVS.

The protein belongs to the Su(H) family. In terms of assembly, interacts with activated NOTCH1, NOTCH2 or NOTCH3. Interacts with MINT/SHARP. This interaction may mediate the recruitment of large corepressor complexes containing proteins such as HDAC1, HDAC2, NCOR2, SAP30, FHL1/KYOT2 and CIR1. Interacts with EP300, MAML1 and PTF1A. Interacts with RITA1, leading to nuclear export, prevent the interaction between RBPJ and NICD product and subsequent down-regulation of the Notch signaling pathway. Interacts with SNW1. Interacts with CHCHD2 and CXXC5. Interacts with BEND6 (via BEN domain). Interacts with NKAPL. Interacts with ZMIZ1. Interacts with RBM15. Interacts with L3MBTL3 and KDM1A; the interaction with KDM1A is weaker in the absence of L3MBTL3 and the interaction with L3MBTL3 is impaired by Notch-derived peptides containing the intracellular domain (NICD).

The protein localises to the nucleus. The protein resides in the cytoplasm. Functionally, transcriptional regulator that plays a central role in Notch signaling, a signaling pathway involved in cell-cell communication that regulates a broad spectrum of cell-fate determinations. Acts as a transcriptional repressor when it is not associated with Notch proteins. When associated with some NICD product of Notch proteins (Notch intracellular domain), it acts as a transcriptional activator that activates transcription of Notch target genes. Probably represses or activates transcription via the recruitment of chromatin remodeling complexes containing histone deacetylase or histone acetylase proteins, respectively. Specifically binds to the immunoglobulin kappa-type J segment recombination signal sequence. Binds specifically to methylated DNA. Binds to the oxygen responsive element of COX4I2 and activates its transcription under hypoxia conditions (4% oxygen). Negatively regulates the phagocyte oxidative burst in response to bacterial infection by repressing transcription of NADPH oxidase subunits. This is Recombining binding protein suppressor of hairless (RBPJ) from Bos taurus (Bovine).